A 211-amino-acid polypeptide reads, in one-letter code: Redox-sensing transcriptional repressor Rex (211 aa).

Positions Leu-17–Phe-56 form a DNA-binding region, H-T-H motif. Gly-91–Gly-96 is a binding site for NAD(+).

Belongs to the transcriptional regulatory Rex family. Homodimer.

The protein resides in the cytoplasm. In terms of biological role, modulates transcription in response to changes in cellular NADH/NAD(+) redox state. This chain is Redox-sensing transcriptional repressor Rex, found in Lysinibacillus sphaericus (strain C3-41).